The sequence spans 88 residues: UPF0213 protein EF_2693 (88 aa).

Positions 5–82 (KSHYFYVLLC…KKLTRKQKEQ (78 aa)) constitute a GIY-YIG domain.

It belongs to the UPF0213 family.

The protein is UPF0213 protein EF_2693 of Enterococcus faecalis (strain ATCC 700802 / V583).